The chain runs to 339 residues: MPNASDQSFPFPILIGDIGGTNARFALLTDAYGEPRQLEPIRTGDFATIEEAMQKSILDKTSVQPRSAILAVAGPIKGDEIPLTNAHWVIRPKDMLASLGLEDVLIINDFEAQALAIAAPADQDVVQIGGGAVRPFNSRVVLGPGTGLGVAGLVYAQHSWIPVPGEGGHVDLGPRTERDFEIWPFLEPIEGRMAGEQILCGRGIMNLYRAVCAANGEAAVLADQAAVTTSALSGADAAAVETVSLFATYLGRVAGDMALIFMARGGVFLAGGISQKILPALMKPEFRAAFEDKAPHSALMRTIPTFAVIHPMAALSGLAAFARTPRDFGVAMEGRRWRR.

Residue 16 to 21 (GDIGGT) coordinates ATP.

The protein belongs to the bacterial glucokinase family.

The protein resides in the cytoplasm. It carries out the reaction D-glucose + ATP = D-glucose 6-phosphate + ADP + H(+). This Sinorhizobium medicae (strain WSM419) (Ensifer medicae) protein is Glucokinase.